The following is a 466-amino-acid chain: Cytochrome c-552 (466 aa).

Residues 1–27 form the signal peptide; it reads MVRILTKKSFALSALVAASLMASGAMA. Position 87 (H87) interacts with heme c. C115, C118, and K119 together coordinate heme. Residues C153, C156, H157, C195, C198, and H199 each contribute to the heme c site. Positions 201, 202, 250, and 252 each coordinate Ca(2+). Y202 provides a ligand contact to substrate. Residue H253 coordinates substrate. Residues H264, C271, C274, H275, H290, C303, C306, H307, and H382 each contribute to the heme c site.

Belongs to the cytochrome c-552 family. Ca(2+) serves as cofactor. It depends on heme c as a cofactor.

Its subcellular location is the periplasm. The enzyme catalyses 6 Fe(III)-[cytochrome c] + NH4(+) + 2 H2O = 6 Fe(II)-[cytochrome c] + nitrite + 8 H(+). It functions in the pathway nitrogen metabolism; nitrate reduction (assimilation). Its function is as follows. Catalyzes the reduction of nitrite to ammonia, consuming six electrons in the process. This is Cytochrome c-552 from Shewanella woodyi (strain ATCC 51908 / MS32).